A 527-amino-acid chain; its full sequence is EGF domain-specific O-linked N-acetylglucosamine transferase (527 aa).

Positions 1–19 (MLMLLVFGVLLHEVPLSGQ) are cleaved as a signal peptide. The short motif at 295–297 (DYD) is the Required for optimal activity element. N-linked (GlcNAc...) asparagine glycosylation occurs at Asn354. The short motif at 524 to 527 (HDEL) is the Prevents secretion from ER element.

It belongs to the glycosyltransferase 61 family. Widely expressed. Expressed in brain, heart, kidney, lung, skeletal muscles and thymus. Highest expression is observed in lung and the lowest in skeletal muscles.

It localises to the endoplasmic reticulum lumen. It carries out the reaction L-seryl-[protein] + UDP-N-acetyl-alpha-D-glucosamine = 3-O-(N-acetyl-beta-D-glucosaminyl)-L-seryl-[protein] + UDP + H(+). The enzyme catalyses L-threonyl-[protein] + UDP-N-acetyl-alpha-D-glucosamine = 3-O-(N-acetyl-beta-D-glucosaminyl)-L-threonyl-[protein] + UDP + H(+). Catalyzes the transfer of a single N-acetylglucosamine from UDP-GlcNAc to a serine or threonine residue in extracellular proteins resulting in their modification with a beta-linked N-acetylglucosamine (O-GlcNAc). Specifically glycosylates the Thr residue located between the fifth and sixth conserved cysteines of folded EGF-like domains. This is EGF domain-specific O-linked N-acetylglucosamine transferase (Eogt) from Mus musculus (Mouse).